A 242-amino-acid polypeptide reads, in one-letter code: Zinc-finger homeodomain protein 13 (242 aa).

A ZF-HD dimerization-type; degenerate zinc finger spans residues 64-111; that stretch reads YYECRKNHAADIGTTAYDGCGEFVSSTGEEDSLNCAACGCHRNFHREE. The disordered stretch occupies residues 144 to 166; that stretch reads GGKSEGKKKKKEKESYGGDPIIK. Residues 155 to 166 show a composition bias toward basic and acidic residues; sequence EKESYGGDPIIK. The homeobox DNA-binding region spans 179–238; the sequence is VKRLKTKFTAEQTEKMRDYAEKLRWKVRPERQEEVEEFCVEIGVNRKNFRIWMNNHKDKI.

Homo- and heterodimer with other ZFHD proteins. Interacts with MIF1, MIF2 and MIF3; these interactions prevent nuclear localization and DNA-binding to inhibit transcription regulation activity. Binds to ZHD11. Mostly expressed in flowers.

The protein localises to the nucleus. Functionally, putative transcription factor. This Arabidopsis thaliana (Mouse-ear cress) protein is Zinc-finger homeodomain protein 13 (ZHD13).